A 128-amino-acid chain; its full sequence is uncharacterized protein (128 aa).

The next 4 helical transmembrane spans lie at 5-25 (ILAL…YSMM), 27-47 (PVLV…PLFL), 60-80 (QLWW…FIGL), and 87-107 (SAVT…HFFF). The EamA domain occupies 9-110 (LIWSSSLIVG…FVGHFFFKTK (102 aa)).

The protein localises to the cell membrane. This is an uncharacterized protein from Haemophilus influenzae (strain ATCC 51907 / DSM 11121 / KW20 / Rd).